A 155-amino-acid chain; its full sequence is Deoxyuridine 5'-triphosphate nucleotidohydrolase (155 aa).

Substrate contacts are provided by residues 72-74 (RSG), Asn85, 89-91 (TVD), and Lys99.

It belongs to the dUTPase family. Mg(2+) serves as cofactor.

It carries out the reaction dUTP + H2O = dUMP + diphosphate + H(+). It participates in pyrimidine metabolism; dUMP biosynthesis; dUMP from dCTP (dUTP route): step 2/2. This enzyme is involved in nucleotide metabolism: it produces dUMP, the immediate precursor of thymidine nucleotides and it decreases the intracellular concentration of dUTP so that uracil cannot be incorporated into DNA. In Parvibaculum lavamentivorans (strain DS-1 / DSM 13023 / NCIMB 13966), this protein is Deoxyuridine 5'-triphosphate nucleotidohydrolase.